A 197-amino-acid chain; its full sequence is GTP cyclohydrolase-2 (197 aa).

50–54 contacts GTP; the sequence is RIHSE. Residues cysteine 55, cysteine 66, and cysteine 68 each contribute to the Zn(2+) site. Residues glutamine 71, 93-95, and threonine 115 each bind GTP; that span reads EGR. The active-site Proton acceptor is the aspartate 127. Catalysis depends on arginine 129, which acts as the Nucleophile. Threonine 150 and lysine 155 together coordinate GTP.

This sequence belongs to the GTP cyclohydrolase II family. Zn(2+) serves as cofactor.

It catalyses the reaction GTP + 4 H2O = 2,5-diamino-6-hydroxy-4-(5-phosphoribosylamino)-pyrimidine + formate + 2 phosphate + 3 H(+). Its pathway is cofactor biosynthesis; riboflavin biosynthesis; 5-amino-6-(D-ribitylamino)uracil from GTP: step 1/4. Functionally, catalyzes the conversion of GTP to 2,5-diamino-6-ribosylamino-4(3H)-pyrimidinone 5'-phosphate (DARP), formate and pyrophosphate. The sequence is that of GTP cyclohydrolase-2 from Neisseria meningitidis serogroup C (strain 053442).